The primary structure comprises 196 residues: Peroxiredoxin TSA2 (196 aa).

The region spanning 3 to 161 (AEVQKQAPPF…ALRLVEGFQW (159 aa)) is the Thioredoxin domain. Residue lysine 14 forms a Glycyl lysine isopeptide (Lys-Gly) (interchain with G-Cter in ubiquitin) linkage. Cysteine 48 serves as the catalytic Cysteine sulfenic acid (-SOH) intermediate. Residues lysine 89 and lysine 132 each participate in a glycyl lysine isopeptide (Lys-Gly) (interchain with G-Cter in ubiquitin) cross-link. A Phosphothreonine modification is found at threonine 174.

It belongs to the peroxiredoxin family. AhpC/Prx1 subfamily. In terms of assembly, homodimer; disulfide-linked, upon oxidation.

The protein resides in the cytoplasm. It catalyses the reaction a hydroperoxide + [thioredoxin]-dithiol = an alcohol + [thioredoxin]-disulfide + H2O. In terms of biological role, thiol-specific peroxidase that catalyzes the reduction of hydrogen peroxide and organic hydroperoxides to water and alcohols, respectively. Plays a role in cell protection against oxidative stress by detoxifying peroxides and as sensor of hydrogen peroxide-mediated signaling events. Can act alternatively as peroxidase and molecular chaperone. Oxidative stress and heat shock exposure cause a reversible shift of the protein structure from low MW species to high MW complexes, triggering a peroxidase-to-chaperone functional switch. The chaperone function of the protein enhances resistance to heat shock. In Saccharomyces cerevisiae (strain ATCC 204508 / S288c) (Baker's yeast), this protein is Peroxiredoxin TSA2.